Here is a 93-residue protein sequence, read N- to C-terminus: Probable endoribonuclease MazF1 (93 aa).

This sequence belongs to the PemK/MazF family. In terms of assembly, forms a complex with cognate antitoxin MazE1.

In terms of biological role, toxic component of a type II toxin-antitoxin (TA) system, its cognate antitoxin is MazE1. Probably an endoribonuclease. This chain is Probable endoribonuclease MazF1 (mazF1), found in Mycobacterium tuberculosis (strain ATCC 25618 / H37Rv).